Reading from the N-terminus, the 37-residue chain is Omega-sparatoxin-Hv1a (37 aa).

3 disulfides stabilise this stretch: C4/C18, C11/C23, and C17/C33.

Expressed by the venom gland.

It is found in the secreted. In terms of biological role, blocks calcium channels (Cav). This Heteropoda venatoria (Brown huntsman spider) protein is Omega-sparatoxin-Hv1a.